A 31-amino-acid chain; its full sequence is Photosystem II reaction center protein T (31 aa).

A helical membrane pass occupies residues 3-23 (ALVYTFLLIGTLGIIFFAIFF).

Belongs to the PsbT family. As to quaternary structure, PSII is composed of 1 copy each of membrane proteins PsbA, PsbB, PsbC, PsbD, PsbE, PsbF, PsbH, PsbI, PsbJ, PsbK, PsbL, PsbM, PsbT, PsbY, PsbZ, Psb30/Ycf12, at least 3 peripheral proteins of the oxygen-evolving complex and a large number of cofactors. It forms dimeric complexes.

Its subcellular location is the plastid. It localises to the chloroplast thylakoid membrane. Functionally, found at the monomer-monomer interface of the photosystem II (PS II) dimer, plays a role in assembly and dimerization of PSII. PSII is a light-driven water plastoquinone oxidoreductase, using light energy to abstract electrons from H(2)O, generating a proton gradient subsequently used for ATP formation. The protein is Photosystem II reaction center protein T of Tetradesmus obliquus (Green alga).